A 213-amino-acid chain; its full sequence is Thymidylate kinase (213 aa).

An ATP-binding site is contributed by 10–17 (GLEGAGKT).

It belongs to the thymidylate kinase family.

The catalysed reaction is dTMP + ATP = dTDP + ADP. Functionally, phosphorylation of dTMP to form dTDP in both de novo and salvage pathways of dTTP synthesis. This chain is Thymidylate kinase, found in Salmonella choleraesuis (strain SC-B67).